Reading from the N-terminus, the 397-residue chain is Riboflavin biosynthesis protein RibBA (397 aa).

The DHBP synthase stretch occupies residues 1-199; it reads MFHRIEEALE…IEDLIAYRRH (199 aa). D-ribulose 5-phosphate-binding positions include 26-27, Asp-31, 138-142, and Glu-162; these read RE and RAGHT. Glu-27 provides a ligand contact to Mg(2+). Position 141 (His-141) interacts with Mg(2+). Positions 200-397 are GTP cyclohydrolase II; it reads HETLVTREVE…VNKLGHLLNL (198 aa). 250 to 254 lines the GTP pocket; sequence RVHSE. Zn(2+) contacts are provided by Cys-255, Cys-266, and Cys-268. Residues Gln-271, 293-295, and Thr-315 contribute to the GTP site; that span reads EGR. The active-site Proton acceptor; for GTP cyclohydrolase activity is the Asp-327. Arg-329 (nucleophile; for GTP cyclohydrolase activity) is an active-site residue. Residues Thr-350 and Lys-355 each contribute to the GTP site.

It in the N-terminal section; belongs to the DHBP synthase family. The protein in the C-terminal section; belongs to the GTP cyclohydrolase II family. Mg(2+) is required as a cofactor. It depends on Mn(2+) as a cofactor. The cofactor is Zn(2+).

It catalyses the reaction D-ribulose 5-phosphate = (2S)-2-hydroxy-3-oxobutyl phosphate + formate + H(+). The catalysed reaction is GTP + 4 H2O = 2,5-diamino-6-hydroxy-4-(5-phosphoribosylamino)-pyrimidine + formate + 2 phosphate + 3 H(+). The protein operates within cofactor biosynthesis; riboflavin biosynthesis; 2-hydroxy-3-oxobutyl phosphate from D-ribulose 5-phosphate: step 1/1. It participates in cofactor biosynthesis; riboflavin biosynthesis; 5-amino-6-(D-ribitylamino)uracil from GTP: step 1/4. In terms of biological role, catalyzes the conversion of D-ribulose 5-phosphate to formate and 3,4-dihydroxy-2-butanone 4-phosphate. Functionally, catalyzes the conversion of GTP to 2,5-diamino-6-ribosylamino-4(3H)-pyrimidinone 5'-phosphate (DARP), formate and pyrophosphate. In Bacillus cereus (strain B4264), this protein is Riboflavin biosynthesis protein RibBA.